The chain runs to 435 residues: GPI-anchor transamidase component PIGU (435 aa).

At Ala-2–Ala-3 the chain is on the cytoplasmic side. Residues Pro-4–Ser-22 form a helical membrane-spanning segment. Topologically, residues Ser-23–Asp-78 are lumenal. Residues Tyr-79 to Ile-99 traverse the membrane as a helical segment. Topologically, residues Gln-100 to Ile-136 are cytoplasmic. Transmembrane regions (helical) follow at residues Pro-137–Ser-158, Thr-159–Ser-178, Ala-179–Leu-194, and Tyr-195–Leu-205. Residues Tyr-206–Phe-222 lie on the Cytoplasmic side of the membrane. Positions 216 and 217 each coordinate a cardiolipin. The helical transmembrane segment at Trp-223–Ser-244 threads the bilayer. Topologically, residues Phe-245–Ser-286 are lumenal. The helical transmembrane segment at Leu-287 to Ile-306 threads the bilayer. Topologically, residues Lys-307–His-311 are cytoplasmic. Residue Lys-309 coordinates a cardiolipin. 2 helical membrane-spanning segments follow: residues Pro-312–Thr-331 and Val-332–Trp-345. Residues Asn-346–Asn-354 are Cytoplasmic-facing. A helical transmembrane segment spans residues Ile-355 to Leu-372. The Lumenal segment spans residues Trp-373–Ser-384. A 2-acyl-6-[6-phosphoethanolamine-alpha-D-mannosyl-(1-&gt;2)-6-phosphoethanolamine-alpha-D-mannosyl-(1-&gt;6)-2-phosphoethanolamine-alpha-D-mannosyl-(1-&gt;4)-alpha-D-glucosaminyl]-1-(1-radyl,2-acyl-sn-glycero-3-phospho)-1D-myo-inositol is bound by residues Asn-383 and Asn-385. A helical membrane pass occupies residues Asn-385–Phe-406. The Cytoplasmic portion of the chain corresponds to Tyr-407 to Lys-435.

Belongs to the PIGU family. As to quaternary structure, heteropentamer. Part of the GPI-anchor transamidase complex, consisting of PIGK, PIGT, PIGS, PIGU and GAA1.

The protein resides in the endoplasmic reticulum membrane. Its pathway is glycolipid biosynthesis; glycosylphosphatidylinositol-anchor biosynthesis. Functionally, component of the glycosylphosphatidylinositol-anchor (GPI-anchor) transamidase (GPI-T) complex that catalyzes the formation of the linkage between a proprotein and a GPI-anchor and participates in GPI anchored protein biosynthesis. Binds the lipid portion of GPI-anchor. May act as an organizer in the transmembrane layer to recruit other subunits, and thus is essential for assembly of the complex. This is GPI-anchor transamidase component PIGU from Homo sapiens (Human).